The primary structure comprises 128 residues: Glycine cleavage system H protein (128 aa).

Residues V24–K106 enclose the Lipoyl-binding domain. K65 is modified (N6-lipoyllysine).

Belongs to the GcvH family. The glycine cleavage system is composed of four proteins: P, T, L and H. (R)-lipoate serves as cofactor.

In terms of biological role, the glycine cleavage system catalyzes the degradation of glycine. The H protein shuttles the methylamine group of glycine from the P protein to the T protein. In Yersinia pseudotuberculosis serotype O:1b (strain IP 31758), this protein is Glycine cleavage system H protein.